The primary structure comprises 539 residues: Membrane protein insertase YidC (539 aa).

The chain crosses the membrane as a helical span at residues 6-26 (NILLIALALVSFLLFQQWNVA). Polar residues predominate over residues 35–44 (EQAQSGSTLP). Residues 35–55 (EQAQSGSTLPAPSYADDLDPA) are disordered. A run of 4 helical transmembrane segments spans residues 341 to 361 (SFIQ…TFIV), 416 to 436 (LGGC…YWAL), 454 to 474 (LSAQ…MFLI), and 495 to 515 (PVMF…YWLV).

It belongs to the OXA1/ALB3/YidC family. Type 1 subfamily. Interacts with the Sec translocase complex via SecD. Specifically interacts with transmembrane segments of nascent integral membrane proteins during membrane integration.

The protein localises to the cell inner membrane. In terms of biological role, required for the insertion and/or proper folding and/or complex formation of integral membrane proteins into the membrane. Involved in integration of membrane proteins that insert both dependently and independently of the Sec translocase complex, as well as at least some lipoproteins. Aids folding of multispanning membrane proteins. This Vibrio atlanticus (strain LGP32) (Vibrio splendidus (strain Mel32)) protein is Membrane protein insertase YidC.